The primary structure comprises 785 residues: MKLGKVELCHFLQLIALFLCFSGMSQAELPRSRSKPYFQSGRSRTKRSWVWNQFFVLEEYMGSDPLYVGKLHSDVDKGDGSIKYILSGEGASSIFIIDENTGDIHATKRLDREEQAYYTLRAQALDRLTNKPVEPESEFVIKIQDINDNEPKFLDGPYTAGVPEMSPVGTSVVQVTATDADDPTYGNSARVVYSILQGQPYFSVEPKTGVIKTALPNMDREAKDQYLLVIQAKDMVGQNGGLSGTTSVTVTLTDVNDNPPRFPRRSYQYNVPESLPVASVVARIKAADADIGVNAEMEYKIVDGDGLGIFKISADKDTQEGIITIQKELDFEAKTSYTLRIEAANRDADPRFLSLGPFSDTTTVKIIVEDVDEPPVFSSPLYPMEVSEATQVGHIIGTVAAHDPDSSNSPVRYSIDRNTDLERYFNIDANSGVITTAKSLDRETNAVHNITVLAMESQNPSQVGRGYVAITILDINDNAPEFAMDYETTVCENAQPGQVIQKISAVDKDEPSNGHQFYFSLTTDMTNNHNFSLKDNKDNTASILTRRNGFRRQEQSVYYLPIFIVDSGSPSLSSTNTLTIRVCDCDADGIAQTCNAEAYVLPAGLSTGALIAILACVLTLLVLILLIVTMRRRKKEPLIFDEERDIRENIVRYDDEGGGEEDTEAFDMAALRNLNAIRDSKTRRDVTPEIQFLSRPTFKNIPDNVIFREFIWERLKEADVDPGAPPYDSLQTYAFEGNGSVAESLSSLDSISSNSDQNYDYLSDWGPRFKRLAEMYGNGQESLYS.

A signal peptide spans 1 to 27; that stretch reads MKLGKVELCHFLQLIALFLCFSGMSQA. The propeptide occupies 28 to 47; that stretch reads ELPRSRSKPYFQSGRSRTKR. At 28–607 the chain is on the extracellular side; it reads ELPRSRSKPY…AYVLPAGLST (580 aa). Cadherin domains are found at residues 49–153, 154–262, 263–377, 378–482, and 482–599; these read WVWN…EPKF, LDGP…PPRF, PRRS…PPVF, SSPL…APEF, and FAMD…AEAY. 2 N-linked (GlcNAc...) asparagine glycosylation sites follow: Asn-449 and Asn-530. The helical transmembrane segment at 608–628 threads the bilayer; it reads GALIAILACVLTLLVLILLIV. Residues 629 to 785 lie on the Cytoplasmic side of the membrane; that stretch reads TMRRRKKEPL…YGNGQESLYS (157 aa).

Its subcellular location is the cell membrane. Functionally, cadherins are calcium-dependent cell adhesion proteins. They preferentially interact with themselves in a homophilic manner in connecting cells; cadherins may thus contribute to the sorting of heterogeneous cell types. This chain is Cadherin-7 (Cdh7), found in Mus musculus (Mouse).